We begin with the raw amino-acid sequence, 422 residues long: Phosphoserine aminotransferase 2, chloroplastic (422 aa).

A chloroplast-targeting transit peptide spans 1–50; the sequence is MAASTNSFLIGNQTQIPSLKPKSISQSFIHFTKPNTINLTTRTKSVSIRC. Alanine 51 is modified (N-acetylalanine). Arginine 101 provides a ligand contact to L-glutamate. Pyridoxal 5'-phosphate is bound by residues 135–136, tryptophan 161, threonine 211, aspartate 233, and glutamine 256; that span reads AT. Lysine 257 carries the post-translational modification N6-(pyridoxal phosphate)lysine. Pyridoxal 5'-phosphate is bound at residue 298–299; it reads NT.

Belongs to the class-V pyridoxal-phosphate-dependent aminotransferase family. SerC subfamily. It depends on pyridoxal 5'-phosphate as a cofactor.

The protein resides in the plastid. It is found in the chloroplast. It carries out the reaction O-phospho-L-serine + 2-oxoglutarate = 3-phosphooxypyruvate + L-glutamate. It catalyses the reaction 4-(phosphooxy)-L-threonine + 2-oxoglutarate = (R)-3-hydroxy-2-oxo-4-phosphooxybutanoate + L-glutamate. The protein operates within amino-acid biosynthesis; L-serine biosynthesis; L-serine from 3-phospho-D-glycerate: step 2/3. In terms of biological role, involved in the plastidial phosphorylated pathway of serine biosynthesis (PPSB). Catalyzes the reversible conversion of 3-phosphohydroxypyruvate to phosphoserine. The protein is Phosphoserine aminotransferase 2, chloroplastic (PSAT2) of Arabidopsis thaliana (Mouse-ear cress).